The chain runs to 283 residues: uncharacterized protein (283 aa).

This is an uncharacterized protein from Caenorhabditis elegans.